The following is a 519-amino-acid chain: Circadian clock oscillator protein KaiC (519 aa).

One can recognise a KaiC 1 domain in the interval 1–247 (MTSAEMTSPN…TITDHGINIF (247 aa)). The ATP site is built by Gly-49, Thr-50, Gly-51, Lys-52, Thr-53, and Leu-54. Thr-53 provides a ligand contact to Mg(2+). Glu-77 (proton acceptor in CI (KaiC 1)) is an active-site residue. ATP is bound at residue Ser-89. The interval 115–122 (QEVVGGFD) is B-loop, required to bind KaiB and SasA. The ATP site is built by Lys-224, Leu-225, Arg-226, Thr-228, His-230, Thr-240, and Asp-241. The segment at 248-260 (PLGAMRLTQRSSN) is linker. A KaiC 2 domain is found at 261–519 (VRVSSGVVRL…RGVQEKGPES (259 aa)). Thr-290, Gly-291, Thr-292, Gly-293, Lys-294, Thr-295, and Leu-296 together coordinate ATP. Residue Thr-295 coordinates Mg(2+). Glu-318 is a Mg(2+) binding site. Glu-318 acts as the Proton acceptor in CII (KaiC 2) in catalysis. Trp-331 contacts ATP. At Ser-431 the chain carries Phosphoserine; by autocatalysis. Phosphothreonine; by autocatalysis is present on Thr-432. ATP is bound by residues Arg-451, Lys-457, Met-458, Arg-459, Ser-461, His-463, and Lys-465. Residues 488–497 (RIISGSPTRI) are A-loop, interacts with KaiA.

Belongs to the KaiC family. As to quaternary structure, homohexamer resembling 2 stacked donuts with a central pore nearly blocked on one side; hexamerization is dependent on ATP-binding. Binds 12 ATP; 6 between each subunit in both layers. KaiB only binds to phospho-Ser-431 KaiC (not doubly phosphorylated KaiC). Complex formation between KaiB and KaiC is regulated by the phosphorylation state of KaiC and by an ATP hydrolysis-driven conformation change in the CI ring of KaiC; complex formation is slow. Slow complex formation is crucial for the timing of the circadian period. KaiB switches to a thioredoxin-like form called KaiB(fs) when bound to KaiC. The KaiABC complex composition changes during the circadian cycle to control KaiC phosphorylation. Complexes KaiC(6), KaiA(2-4):KaiC(6), KaiB(6):KaiC(6) and KaiC(6):KaiB(6):KaiA(12) are among the most important forms, many form cooperatively. Interacts directly with KaiB and SasA. The CI domain binds to KaiB and SasA; as they have a similar fold they compete for the same site on CI. CikA interacts with this protein in the clock complex. Binds to the C-terminus of KaiA via a coiled-coil structure. Forms KaiC(6):KaiB(1) and KaiC(6):KaiB(6) complexes. Mg(2+) serves as cofactor. Post-translationally, has a 4 step phosphorylation cycle; the autokinase acts first on Thr-432, then Ser-431. When Ser-431 is modified KaiC switches to an autophosphatase mode, acting first on phospho-Thr-432 then phospho-Ser-431. Phosphorylated and dephosphorylated on serine/threonine residues by autocatalysis. Unphosphorylated, mono- and di-phosphorylated forms exist. The phosphorylated form correlates with clock speed. The presence of KaiA increases phosphorylation and stabilizes these forms. In terms of processing, phosphorylated on serine and threonine residues by autocatalysis. Has a 4 step phosphorylation cycle; the autokinase acts first on Thr-432, then Ser-431. When Ser-431 is modified KaiC switches to an autophosphatase mode, acting first on phospho-Thr-432 then phospho-Ser-431.

It catalyses the reaction L-seryl-[protein] + ATP = O-phospho-L-seryl-[protein] + ADP + H(+). It carries out the reaction L-threonyl-[protein] + ATP = O-phospho-L-threonyl-[protein] + ADP + H(+). The enzyme catalyses ATP + H2O = ADP + phosphate + H(+). With respect to regulation, interaction with KaiA stimulates autophosphorylation, KaiC interaction with KaiB sequesters KaiA, preventing it stimulating the KaiC kinase, leading to autodephosphorylation. A KaiA dimer is sufficient to enhance KaiC phosphorylation. Interaction of KaiA with the A-loop stimulates autokinase activity. Functionally, the KaiABC oscillator complex constitutes the main circadian regulator in cyanobacteria. Complex composition changes during the circadian cycle to control KaiC phosphorylation; KaiA stimulates KaiC autophosphorylation, while KaiB sequesters KaiA, leading to KaiC autodephosphorylation. The Kai complex controls chromosome condensation, leading to a transcription accessible chromosome during the first half of the circadian cycle and a compact, less transcription-accessible chromosome during the latter half. Clock output pathways impact the RpaA transcriptional regulator. Circadian oscillations can be generated in vitro by incubating KaiA, KaiB and KaiC with 1 mM ATP. The cycle is self-sustainable for at least 3 cycles and resistant to temperature changes. Mutations in KaiC alone prolong or reduce the circadian rhythm. A very robust clock is reconstituted with KaiA, KaiB, KaiC, SasA, CikA and RpaA; output is measured by transcription from an appropriate reporter. Its function is as follows. The level of KaiC phosphorylation and KaiC ATPase activity represent the key features of the biochemical oscillator. KaiA homodimer binding to the KaiC CII domain stimulates KaiC's ATPase activity and forms KaiA(2-4):KaiC(6) complexes, which stimulate KaiC autophosphorylation first on Thr-432 then Ser-431. Phospho-Ser-431-KaiC accumulation triggers binding of KaiB to CI to form the KaiB(6):KaiC(6) complex, leading to changes in the output regulators CikA and SasA. KaiB(6):KaiC(6) formation exposes a site for KaiA binding that sequesters KaiA from the CII domain, making the KaiC(6):KaiB(6):KaiA(12) complex that results in KaiC autodephosphorylation. Complete dephosphorylation of KaiC leads to dissociation of KaiA(2):KaiB(1), completing 1 cycle of the Kai oscillator. In terms of biological role, has a weak, temperature-independent ATPase activity (about 15 molecules of ATP per day); the addition of KaiA and KaiB increases activity slightly and makes the activity oscillate with a circadian period in vitro for over 60 hours. ATPase activity defines the circadian period. The phosphorylation state of KaiC modulates its ATPase activity and effects KaiB binding. There are several clock output pathways; SasA/RpaA, CikA/RpaA and LabA. KaiC enhances the autophosphorylation activity of SasA, which then transfers its phosphate group to RpaA to activate it. Phosphotransfer is maximal when KaiC phosphorylation is active during the circadian cycle. KaiB and KaiC together enhance the phosphatase activity of CikA on phospho-RpaA. Functionally, kaiC is important for metabolic partitioning during the dark to light shift, modulating the balance between the Calvin cycle and oxidative pentose phosphate pathway under natural growth conditions. The chain is Circadian clock oscillator protein KaiC from Synechococcus elongatus (strain ATCC 33912 / PCC 7942 / FACHB-805) (Anacystis nidulans R2).